The primary structure comprises 459 residues: VGFKAGVKDYKLTYYTPDYETKDTDILAAFRVTPQPGVPPEEAGAVVAAESSTGTWTTVWTDGLTNLDRYKGRCYHIEPVAGEENQFIAYVAYPLDLFEEGSVTNMFTSIVGNVFGFKALRALRLEDLRIPVAYVKTFQGPPHGIQVERDKLNKYGRPLLGCTIKPKLGLSAKNYGRAVYECLRGGLDFTKDDENVNSQPFMRWRDRFLFCAEALYKAQAETGEIKGHYLNATAGTCEEMIKRAVFARELGVPIVMHDYLTGGFTANTSLAHYCRDNGLLLHIHRAMHAVIDRQKNHGIHFRVLAKALRMSGGDHIHSGTVVGKLEGEREITLGFVDLLRDDFIEKDRSRGIYFTQDWVSLPGVLPVASGGIHVWHMPALTEIFGDDSVLQFGGGTLGHPWGNAPGAVANRVALEACVQARNEGRDLAREGNEIIREACKWSPELAAACEVWKEIKFEF.

The residue at position 4 (lysine 4) is an N6,N6,N6-trimethyllysine. Residues asparagine 113 and threonine 163 each contribute to the substrate site. Lysine 165 acts as the Proton acceptor in catalysis. Position 167 (lysine 167) interacts with substrate. Mg(2+) is bound by residues lysine 191, aspartate 193, and glutamate 194. The residue at position 191 (lysine 191) is an N6-carboxylysine. Catalysis depends on histidine 284, which acts as the Proton acceptor. Substrate-binding residues include arginine 285, histidine 317, and serine 369.

The protein belongs to the RuBisCO large chain family. Type I subfamily. In terms of assembly, heterohexadecamer of 8 large chains and 8 small chains; disulfide-linked. The disulfide link is formed within the large subunit homodimers. Mg(2+) serves as cofactor. In terms of processing, the disulfide bond which can form in the large chain dimeric partners within the hexadecamer appears to be associated with oxidative stress and protein turnover.

It localises to the plastid. It is found in the chloroplast. It carries out the reaction 2 (2R)-3-phosphoglycerate + 2 H(+) = D-ribulose 1,5-bisphosphate + CO2 + H2O. The catalysed reaction is D-ribulose 1,5-bisphosphate + O2 = 2-phosphoglycolate + (2R)-3-phosphoglycerate + 2 H(+). RuBisCO catalyzes two reactions: the carboxylation of D-ribulose 1,5-bisphosphate, the primary event in carbon dioxide fixation, as well as the oxidative fragmentation of the pentose substrate in the photorespiration process. Both reactions occur simultaneously and in competition at the same active site. In Micranthes integrifolia (Wholeleaf saxifrage), this protein is Ribulose bisphosphate carboxylase large chain.